The primary structure comprises 640 residues: Isoniazid-induced protein IniA (640 aa).

Residues 497–519 (IGMLSSVVGLGLFNPLSVGAGLI) traverse the membrane as a helical segment. Positions 560-628 (RDRLKMIQRL…QVNDNLAGLE (69 aa)) form a coiled coil.

In terms of assembly, forms multimeric structures containing a central pore.

Its subcellular location is the cell membrane. Its function is as follows. Participates in the development of tolerance to both isoniazid and ethambutol. May function through a MDR-pump like mechanism, although it does not appear to directly transport isoniazid from the cell. The chain is Isoniazid-induced protein IniA (iniA) from Mycobacterium tuberculosis (strain CDC 1551 / Oshkosh).